Reading from the N-terminus, the 753-residue chain is 5-methyltetrahydropteroyltriglutamate--homocysteine methyltransferase (753 aa).

5-methyltetrahydropteroyltri-L-glutamate is bound by residues 17–20 (RELK) and lysine 117. L-homocysteine is bound by residues 431 to 433 (IGS) and glutamate 484. Residues 431–433 (IGS) and glutamate 484 each bind L-methionine. 5-methyltetrahydropteroyltri-L-glutamate contacts are provided by residues 515–516 (RC) and tryptophan 561. Aspartate 599 is an L-homocysteine binding site. Aspartate 599 serves as a coordination point for L-methionine. Residue glutamate 605 coordinates 5-methyltetrahydropteroyltri-L-glutamate. Zn(2+)-binding residues include histidine 641, cysteine 643, and glutamate 665. Histidine 694 serves as the catalytic Proton donor. Cysteine 726 contributes to the Zn(2+) binding site.

The protein belongs to the vitamin-B12 independent methionine synthase family. Zn(2+) is required as a cofactor.

The enzyme catalyses 5-methyltetrahydropteroyltri-L-glutamate + L-homocysteine = tetrahydropteroyltri-L-glutamate + L-methionine. The protein operates within amino-acid biosynthesis; L-methionine biosynthesis via de novo pathway; L-methionine from L-homocysteine (MetE route): step 1/1. Its function is as follows. Catalyzes the transfer of a methyl group from 5-methyltetrahydrofolate to homocysteine resulting in methionine formation. This Klebsiella pneumoniae (strain 342) protein is 5-methyltetrahydropteroyltriglutamate--homocysteine methyltransferase.